Reading from the N-terminus, the 514-residue chain is ATP synthase subunit alpha (514 aa).

Residue 170-177 (GDRQIGKT) participates in ATP binding.

The protein belongs to the ATPase alpha/beta chains family. In terms of assembly, F-type ATPases have 2 components, CF(1) - the catalytic core - and CF(0) - the membrane proton channel. CF(1) has five subunits: alpha(3), beta(3), gamma(1), delta(1), epsilon(1). CF(0) has three main subunits: a(1), b(2) and c(9-12). The alpha and beta chains form an alternating ring which encloses part of the gamma chain. CF(1) is attached to CF(0) by a central stalk formed by the gamma and epsilon chains, while a peripheral stalk is formed by the delta and b chains.

It is found in the cell inner membrane. The enzyme catalyses ATP + H2O + 4 H(+)(in) = ADP + phosphate + 5 H(+)(out). Produces ATP from ADP in the presence of a proton gradient across the membrane. The alpha chain is a regulatory subunit. The polypeptide is ATP synthase subunit alpha (Stutzerimonas stutzeri (strain A1501) (Pseudomonas stutzeri)).